Consider the following 565-residue polypeptide: CTP synthase (565 aa).

Residues methionine 1–proline 268 form an amidoligase domain region. Position 14 (serine 14) interacts with CTP. Serine 14 provides a ligand contact to UTP. Residue serine 15–isoleucine 20 participates in ATP binding. Residue tyrosine 55 coordinates L-glutamine. Aspartate 72 is a binding site for ATP. Aspartate 72 and glutamate 142 together coordinate Mg(2+). CTP is bound by residues aspartate 149 to glutamate 151, lysine 189 to glutamine 194, and lysine 225. UTP is bound by residues lysine 189–glutamine 194 and lysine 225. The 243-residue stretch at proline 301 to glutamate 543 folds into the Glutamine amidotransferase type-1 domain. An L-glutamine-binding site is contributed by glycine 363. The active-site Nucleophile; for glutamine hydrolysis is cysteine 390. Residues leucine 391–glutamine 394, glutamate 414, and arginine 471 each bind L-glutamine. Active-site residues include histidine 516 and glutamate 518. Residues aspartate 545–methionine 565 form a disordered region.

This sequence belongs to the CTP synthase family. In terms of assembly, homotetramer.

The enzyme catalyses UTP + L-glutamine + ATP + H2O = CTP + L-glutamate + ADP + phosphate + 2 H(+). It carries out the reaction L-glutamine + H2O = L-glutamate + NH4(+). It catalyses the reaction UTP + NH4(+) + ATP = CTP + ADP + phosphate + 2 H(+). Its pathway is pyrimidine metabolism; CTP biosynthesis via de novo pathway; CTP from UDP: step 2/2. With respect to regulation, allosterically activated by GTP, when glutamine is the substrate; GTP has no effect on the reaction when ammonia is the substrate. The allosteric effector GTP functions by stabilizing the protein conformation that binds the tetrahedral intermediate(s) formed during glutamine hydrolysis. Inhibited by the product CTP, via allosteric rather than competitive inhibition. Functionally, catalyzes the ATP-dependent amination of UTP to CTP with either L-glutamine or ammonia as the source of nitrogen. Regulates intracellular CTP levels through interactions with the four ribonucleotide triphosphates. The polypeptide is CTP synthase (Salinibacter ruber (strain DSM 13855 / M31)).